The following is a 98-amino-acid chain: Co-chaperonin GroES (98 aa).

This sequence belongs to the GroES chaperonin family. Heptamer of 7 subunits arranged in a ring. Interacts with the chaperonin GroEL.

The protein resides in the cytoplasm. Functionally, together with the chaperonin GroEL, plays an essential role in assisting protein folding. The GroEL-GroES system forms a nano-cage that allows encapsulation of the non-native substrate proteins and provides a physical environment optimized to promote and accelerate protein folding. GroES binds to the apical surface of the GroEL ring, thereby capping the opening of the GroEL channel. This is Co-chaperonin GroES from Rhizobium leguminosarum bv. trifolii (strain WSM2304).